The chain runs to 121 residues: Large ribosomal subunit protein uL14 (121 aa).

The protein belongs to the universal ribosomal protein uL14 family. In terms of assembly, part of the 50S ribosomal subunit. Forms a cluster with proteins L3 and L19. In the 70S ribosome, L14 and L19 interact and together make contacts with the 16S rRNA in bridges B5 and B8.

In terms of biological role, binds to 23S rRNA. Forms part of two intersubunit bridges in the 70S ribosome. This chain is Large ribosomal subunit protein uL14, found in Aquifex pyrophilus.